We begin with the raw amino-acid sequence, 43 residues long: KCNPKGFTNEGCRGIDKKHWNSQCRTSQSYVRALTMDSRKKIG.

Belongs to the NGF-beta family.

The protein resides in the secreted. Its function is as follows. Promotes the survival of neuronal populations that are all located either in the central nervous system or directly connected to it. The chain is Neurotrophic factor BDNF (bdnf) from Raja clavata (Thornback ray).